A 470-amino-acid polypeptide reads, in one-letter code: Calcium/manganese antiporter SLC30A10 (470 aa).

The Cytoplasmic segment spans residues 1–10 (MGRYSGKTCR). A helical membrane pass occupies residues 11–31 (LLFMLVLTAAFFVAELVSGYL). Topologically, residues 32–34 (GNS) are extracellular. Residues 35-55 (IALLSDSFNMLSDLISLCVGL) form a helical membrane-spanning segment. Residues 56–81 (GSGYIARRGPRGSSATYGYVRAEVVG) are Cytoplasmic-facing. Residues 82–102 (ALSNAVFLTALCFTIFVEAVL) traverse the membrane as a helical segment. Residues 103-113 (RLARPERIDDP) are Extracellular-facing. A helical membrane pass occupies residues 114-134 (ELVLIVGALGLAVNVVGLLIF). At 135–233 (QDCGACFSRC…KSEALNIRGV (99 aa)) the chain is on the cytoplasmic side. The interval 146–223 (RGRRTRPSQQ…EPEETTKKEK (78 aa)) is disordered. Residues 171-184 (AATATAPGSGTAVT) show a composition bias toward low complexity. A helical transmembrane segment spans residues 234-254 (LLHVMGDALGSVVVVITAIIF). Topologically, residues 255-270 (YVQPLRREDPCNWQCY) are extracellular. A helical transmembrane segment spans residues 271-291 (IDPSLTVVMVIIILSSAFPLI). Residues 292-470 (KETAVILLQM…RQHYENSTHF (179 aa)) lie on the Cytoplasmic side of the membrane. Residues 300–470 (QMVPKGVNME…RQHYENSTHF (171 aa)) are required for plasma membrane localization. A disordered region spans residues 451-470 (QGQTLSKTQERQHYENSTHF). Over residues 458–470 (TQERQHYENSTHF) the composition is skewed to basic and acidic residues.

It belongs to the cation diffusion facilitator (CDF) transporter (TC 2.A.4) family. SLC30A subfamily. As to quaternary structure, forms homodimers. Forms heterodimers and high-molecular weight oligomers with SLC30A3, SLC30A2 and SLC30A4; heterodimerization is mediated by covalent-bound tyrosine residues, occurs probably in a tissue-specific manner and could mediate the intracellular zinc transport activity into early endosomes and recycling endosomes. In terms of tissue distribution, specifically expressed in fetal liver and fetal brain.

The protein resides in the cell membrane. It localises to the golgi apparatus membrane. It is found in the recycling endosome membrane. The protein localises to the early endosome membrane. It catalyses the reaction Mn(2+)(out) + Ca(2+)(in) = Mn(2+)(in) + Ca(2+)(out). The enzyme catalyses Zn(2+)(in) = Zn(2+)(out). Functionally, calcium:manganese antiporter of the plasma membrane mediating the efflux of intracellular manganese coupled to an active extracellular calcium exchange. Required for intracellular manganese homeostasis, an essential cation for the function of several enzymes, including some crucially important for the metabolism of neurotransmitters and other neuronal metabolic pathways. Manganese can also be cytotoxic and induce oxidative stress, mitochondrial dysfunction and apoptosis. Could also have an intracellular zinc ion transporter activity, directly regulating intracellular zinc ion homeostasis and more indirectly various signaling pathway and biological processes. The protein is Calcium/manganese antiporter SLC30A10 of Mus musculus (Mouse).